Consider the following 212-residue polypeptide: RNA chaperone ProQ (212 aa).

Basic and acidic residues-rich tracts occupy residues 102–124 and 132–144; these read ALKE…EKAK and RKAD…DKPK. The interval 102 to 149 is disordered; sequence ALKESKERVFASRRTNTKEEKAKQPRRPAPRKADAAAKSDKPKAAPKA.

Belongs to the ProQ family.

It is found in the cytoplasm. Its function is as follows. RNA chaperone with significant RNA binding, RNA strand exchange and RNA duplexing activities. The sequence is that of RNA chaperone ProQ from Aeromonas hydrophila subsp. hydrophila (strain ATCC 7966 / DSM 30187 / BCRC 13018 / CCUG 14551 / JCM 1027 / KCTC 2358 / NCIMB 9240 / NCTC 8049).